Consider the following 198-residue polypeptide: Host transcription reprogramming factor 1 (198 aa).

The first 19 residues, 1–19 (MQLSNFLSIWALVAMGATA), serve as a signal peptide directing secretion. Disordered regions lie at residues 21–59 (PMPS…SYHS) and 71–198 (ERLA…PVQL). Residues 58 to 81 (HSCETCAAPFRTEERLAAHRQADH) form a C2H2-type zinc finger. Composition is skewed to basic and acidic residues over residues 71-80 (ERLAAHRQAD), 104-128 (TSER…RSQE), and 167-177 (KLDKPTRKEQY).

It localises to the secreted. The protein localises to the host nucleus. Functionally, secreted effector that translocates into the nuclei of host cells to reprogram the expression of immunity-associated genes by binding to effector binding elements (EBEs) in rice. Binds the 5'-CAATCTTC-3' EBE of promoters from targeted rice genes and probably recruits a yet to be determined host repressor. Causes ambivalent immunity with increased susceptibility to the hemibiotrophic pathogens Magnaporthe oryzae and Xanthomonas oryzae pv. oryzae, but enhances resistance to Cochliobolus miyabeanus, a necrotrophic pathogen. The sequence is that of Host transcription reprogramming factor 1 from Pyricularia oryzae (strain 70-15 / ATCC MYA-4617 / FGSC 8958) (Rice blast fungus).